The sequence spans 468 residues: Glutamyl-tRNA reductase (468 aa).

Substrate-binding positions include 49–52 (TCNR), Ser109, 114–116 (EQQ), and Gln120. Cys50 acts as the Nucleophile in catalysis. Residue 189 to 194 (GAGAMG) participates in NADP(+) binding. Positions 443–468 (VPSGFDAESRRGGGDMQSSPKRSPSN) are disordered. The segment covering 458–468 (MQSSPKRSPSN) has biased composition (polar residues).

This sequence belongs to the glutamyl-tRNA reductase family. In terms of assembly, homodimer.

The enzyme catalyses (S)-4-amino-5-oxopentanoate + tRNA(Glu) + NADP(+) = L-glutamyl-tRNA(Glu) + NADPH + H(+). It functions in the pathway porphyrin-containing compound metabolism; protoporphyrin-IX biosynthesis; 5-aminolevulinate from L-glutamyl-tRNA(Glu): step 1/2. Functionally, catalyzes the NADPH-dependent reduction of glutamyl-tRNA(Glu) to glutamate 1-semialdehyde (GSA). The sequence is that of Glutamyl-tRNA reductase from Mycobacterium tuberculosis (strain ATCC 25177 / H37Ra).